The chain runs to 227 residues: MRWAIVRFPGANCDEDARFALEKAGIRAEFVWHTERDLRGFDGVFLPGGFSYGDYLRAGALAAKSPVMEAVRRFAEEGRYVVGVCNGFQILTEAGLLPGALLANLNLHFTCKEVGVRVERNDLPFTRLYPRGQVLRLPIAHGEGRYYADPETLARLEGEGLVVFRYAPLKDEADYNPNGSLHDIAGIVSEKGNVLGMMPHPERAVDEVLGNTDGLPFFLGLVREVAR.

One can recognise a Glutamine amidotransferase type-1 domain in the interval 2-227 (RWAIVRFPGA…FLGLVREVAR (226 aa)). C85 (nucleophile) is an active-site residue. Residues H200 and E202 contribute to the active site.

Part of the FGAM synthase complex composed of 1 PurL, 1 PurQ and 2 PurS subunits.

It is found in the cytoplasm. It carries out the reaction N(2)-formyl-N(1)-(5-phospho-beta-D-ribosyl)glycinamide + L-glutamine + ATP + H2O = 2-formamido-N(1)-(5-O-phospho-beta-D-ribosyl)acetamidine + L-glutamate + ADP + phosphate + H(+). The enzyme catalyses L-glutamine + H2O = L-glutamate + NH4(+). The protein operates within purine metabolism; IMP biosynthesis via de novo pathway; 5-amino-1-(5-phospho-D-ribosyl)imidazole from N(2)-formyl-N(1)-(5-phospho-D-ribosyl)glycinamide: step 1/2. Functionally, part of the phosphoribosylformylglycinamidine synthase complex involved in the purines biosynthetic pathway. Catalyzes the ATP-dependent conversion of formylglycinamide ribonucleotide (FGAR) and glutamine to yield formylglycinamidine ribonucleotide (FGAM) and glutamate. The FGAM synthase complex is composed of three subunits. PurQ produces an ammonia molecule by converting glutamine to glutamate. PurL transfers the ammonia molecule to FGAR to form FGAM in an ATP-dependent manner. PurS interacts with PurQ and PurL and is thought to assist in the transfer of the ammonia molecule from PurQ to PurL. This Thermus thermophilus (strain ATCC BAA-163 / DSM 7039 / HB27) protein is Phosphoribosylformylglycinamidine synthase subunit PurQ.